Reading from the N-terminus, the 426-residue chain is Serine--tRNA ligase (426 aa).

231–233 (TAE) serves as a coordination point for L-serine. Residues 262 to 264 (RRE) and V278 each bind ATP. E285 lines the L-serine pocket. 349–352 (EVSS) lines the ATP pocket. S384 lines the L-serine pocket.

Belongs to the class-II aminoacyl-tRNA synthetase family. Type-1 seryl-tRNA synthetase subfamily. As to quaternary structure, homodimer. The tRNA molecule binds across the dimer.

It localises to the cytoplasm. The catalysed reaction is tRNA(Ser) + L-serine + ATP = L-seryl-tRNA(Ser) + AMP + diphosphate + H(+). The enzyme catalyses tRNA(Sec) + L-serine + ATP = L-seryl-tRNA(Sec) + AMP + diphosphate + H(+). It functions in the pathway aminoacyl-tRNA biosynthesis; selenocysteinyl-tRNA(Sec) biosynthesis; L-seryl-tRNA(Sec) from L-serine and tRNA(Sec): step 1/1. Its function is as follows. Catalyzes the attachment of serine to tRNA(Ser). Is also able to aminoacylate tRNA(Sec) with serine, to form the misacylated tRNA L-seryl-tRNA(Sec), which will be further converted into selenocysteinyl-tRNA(Sec). The sequence is that of Serine--tRNA ligase from Chlamydia caviae (strain ATCC VR-813 / DSM 19441 / 03DC25 / GPIC) (Chlamydophila caviae).